A 357-amino-acid chain; its full sequence is N-acetyl-gamma-glutamyl-phosphate reductase (357 aa).

The active site involves Cys151.

Belongs to the NAGSA dehydrogenase family. Type 1 subfamily.

It localises to the cytoplasm. It catalyses the reaction N-acetyl-L-glutamate 5-semialdehyde + phosphate + NADP(+) = N-acetyl-L-glutamyl 5-phosphate + NADPH + H(+). The protein operates within amino-acid biosynthesis; L-arginine biosynthesis; N(2)-acetyl-L-ornithine from L-glutamate: step 3/4. Catalyzes the NADPH-dependent reduction of N-acetyl-5-glutamyl phosphate to yield N-acetyl-L-glutamate 5-semialdehyde. In Corynebacterium kroppenstedtii (strain DSM 44385 / JCM 11950 / CIP 105744 / CCUG 35717), this protein is N-acetyl-gamma-glutamyl-phosphate reductase.